A 264-amino-acid polypeptide reads, in one-letter code: 14-3-3-like protein GF14-A (264 aa).

Residues Asp-245–His-264 are disordered. Over residues Asp-252–His-264 the composition is skewed to basic and acidic residues.

This sequence belongs to the 14-3-3 family.

In terms of biological role, is associated with a DNA binding complex that binds to the G box, a well-characterized cis-acting DNA regulatory element found in plant genes. In Oryza sativa subsp. japonica (Rice), this protein is 14-3-3-like protein GF14-A (GF14A).